We begin with the raw amino-acid sequence, 374 residues long: ORC1-type DNA replication protein 6 (374 aa).

Residues 66-70 (TGKTT), Tyr209, and Arg221 contribute to the ATP site.

It belongs to the CDC6/cdc18 family.

Involved in regulation of DNA replication. In Halobacterium salinarum (strain ATCC 700922 / JCM 11081 / NRC-1) (Halobacterium halobium), this protein is ORC1-type DNA replication protein 6 (orc6).